The chain runs to 986 residues: Ephrin type-B receptor 2 (986 aa).

The first 18 residues, M1–A18, serve as a signal peptide directing secretion. Residues V19–L543 lie on the Extracellular side of the membrane. The Eph LBD domain occupies E20–Q202. Disulfide bonds link C62-C184 and C97-C107. N265, N336, N428, and N482 each carry an N-linked (GlcNAc...) asparagine glycan. 2 consecutive Fibronectin type-III domains span residues I324–A434 and A435–E530. The chain crosses the membrane as a helical span at residues I544–V564. At C565–V986 the chain is on the cytoplasmic side. One can recognise a Protein kinase domain in the interval V621 to I884. Residues I627–V635 and K653 contribute to the ATP site. D746 acts as the Proton acceptor in catalysis. K891 participates in a covalent cross-link: Glycyl lysine isopeptide (Lys-Gly) (interchain with G-Cter in ubiquitin). Positions T913 to Q977 constitute an SAM domain. The PDZ-binding motif lies at V984–V986.

The protein belongs to the protein kinase superfamily. Tyr protein kinase family. Ephrin receptor subfamily. As to quaternary structure, heterotetramer upon binding of the ligand. The heterotetramer is composed of an ephrin dimer and a receptor dimer. Interacts (via PDZ-binding motif) with GRIP1 and PICK1 (via PDZ domain). Interacts with ARHGEF15; mediates ARHGEF15 phosphorylation, ubiquitination and degradation by the proteasome. Interacts with AQP1; involved in endolymph production in the inner ear. Interacts with EFNA5. Interacts with SPSB1. Interacts with SPSB4. Interacts with SH2D3C. Post-translationally, autophosphorylated; ligand binding stimulates autophosphorylation on tyrosine residues. Ligand binding induces cleavage by matrix metalloproteinases (MMPs) such as MMP7/MMP9, producing an EphB2/N-terminal fragment (NTF) and a C-terminal long fragment (EphB2-LF). EphB2-LF is further cleaved by MMPs, producing EphB2/CTF1 which is further cleaved by the PS1/gamma-secretase producing EphB2/CTF2. In terms of processing, polyubiquitinated; ligand binding stimulates ubiquitination. Ubiquitinated by RNF186 at Lys-891, mainly through 'Lys-27'-linked polyubiquitin chains. Ubiquitinated by CRL2(KLHDC2) E3 ligase complex. As to expression, expressed in the epithelial dark cells of the inner ear. Expressed in the region of the proximal tubules of the kidney nephron. Expressed in myogenic progenitor cells.

It localises to the cell membrane. The protein resides in the cell projection. Its subcellular location is the axon. The protein localises to the dendrite. The enzyme catalyses L-tyrosyl-[protein] + ATP = O-phospho-L-tyrosyl-[protein] + ADP + H(+). Receptor tyrosine kinase which binds promiscuously transmembrane ephrin-B family ligands residing on adjacent cells, leading to contact-dependent bidirectional signaling into neighboring cells. The signaling pathway downstream of the receptor is referred to as forward signaling while the signaling pathway downstream of the ephrin ligand is referred to as reverse signaling. Functions in axon guidance during development. Involved in the guidance of commissural axons, that form a major interhemispheric connection between the 2 temporal lobes of the cerebral cortex. Also involved in guidance of contralateral inner ear efferent growth cones at the midline and of retinal ganglion cell axons to the optic disk. In addition to axon guidance, also regulates dendritic spines development and maturation and stimulates the formation of excitatory synapses. Upon activation by EFNB1, abolishes the ARHGEF15-mediated negative regulation on excitatory synapse formation. Controls other aspects of development including angiogenesis, palate development and in inner ear development through regulation of endolymph production. Forward and reverse signaling through the EFNB2/EPHB2 complex regulate movement and adhesion of cells that tubularize the urethra and septate the cloaca. May function as a tumor suppressor. May be involved in the regulation of platelet activation and blood coagulation. This Mus musculus (Mouse) protein is Ephrin type-B receptor 2.